Consider the following 309-residue polypeptide: Probable WRKY transcription factor 26 (309 aa).

Positions 1–24 (MGSFDRQRAVPKFKTATPSPLPLS) are disordered. Positions 111–176 (SSNKTSDDGY…YKGSHNHPKP (66 aa)) form a DNA-binding region, WRKY 1. The Zn(2+) site is built by Cys142, Cys147, His171, and His173. The segment at 167 to 210 (YKGSHNHPKPQSTKRSSSTAIAAHQNSSNGDGKDIGEDETEAKR) is disordered. Positions 175–196 (KPQSTKRSSSTAIAAHQNSSNG) are enriched in polar residues. The span at 197–210 (DGKDIGEDETEAKR) shows a compositional bias: basic and acidic residues. The WRKY 2 DNA-binding region spans 228–293 (SDIDILDDGY…YEGKHKHQIP (66 aa)). 4 residues coordinate Zn(2+): Cys259, Cys264, His288, and His290.

This sequence belongs to the WRKY group I family. Interacts with VQ10.

It localises to the nucleus. In terms of biological role, transcription factor. Interacts specifically with the W box (5'-(T)TGAC[CT]-3'), a frequently occurring elicitor-responsive cis-acting element. Functions with WRKY25 and WRKY33 as positive regulator of plant thermotolerance by partially participating in ethylene-response signal transduction pathway. The protein is Probable WRKY transcription factor 26 (WRKY26) of Arabidopsis thaliana (Mouse-ear cress).